Consider the following 347-residue polypeptide: Probable RNA methyltransferase Lcho_2507 (347 aa).

The active-site Proton acceptor is the Glu-89. The Radical SAM core domain maps to 92–318 (LLPRDGLCVS…TKLRQSAGQD (227 aa)). A disulfide bond links Cys-99 and Cys-323. [4Fe-4S] cluster is bound by residues Cys-106, Cys-110, and Cys-113. S-adenosyl-L-methionine contacts are provided by residues 151-152 (GE), Ser-181, 204-206 (SLH), and Asn-280. The active-site S-methylcysteine intermediate is the Cys-323.

It belongs to the radical SAM superfamily. RlmN family. [4Fe-4S] cluster is required as a cofactor.

It is found in the cytoplasm. In Leptothrix cholodnii (strain ATCC 51168 / LMG 8142 / SP-6) (Leptothrix discophora (strain SP-6)), this protein is Probable RNA methyltransferase Lcho_2507.